The chain runs to 353 residues: Photosystem II D2 protein (353 aa).

Residue T2 is modified to N-acetylthreonine. A Phosphothreonine modification is found at T2. The helical transmembrane segment at 41-61 (CAYFAIGGWFTGTTFVTSWYT) threads the bilayer. H118 is a binding site for chlorophyll a. Residues 125–141 (GFMLRQFELARSVQLRP) form a helical membrane-spanning segment. Residues Q130 and N143 each coordinate pheophytin a. The helical transmembrane segment at 153-166 (VFVSVFLIYPLGQS) threads the bilayer. H198 provides a ligand contact to chlorophyll a. The chain crosses the membrane as a helical span at residues 208–228 (AALLCAIHGATVENTLFEDGD). Residues H215 and F262 each coordinate a plastoquinone. H215 contributes to the Fe cation binding site. H269 serves as a coordination point for Fe cation. The helical transmembrane segment at 279–295 (GLWMSALGVVGLALNLR) threads the bilayer.

The protein belongs to the reaction center PufL/M/PsbA/D family. In terms of assembly, PSII is composed of 1 copy each of membrane proteins PsbA, PsbB, PsbC, PsbD, PsbE, PsbF, PsbH, PsbI, PsbJ, PsbK, PsbL, PsbM, PsbT, PsbX, PsbY, PsbZ, Psb30/Ycf12, at least 3 peripheral proteins of the oxygen-evolving complex and a large number of cofactors. It forms dimeric complexes. The D1/D2 heterodimer binds P680, chlorophylls that are the primary electron donor of PSII, and subsequent electron acceptors. It shares a non-heme iron and each subunit binds pheophytin, quinone, additional chlorophylls, carotenoids and lipids. There is also a Cl(-1) ion associated with D1 and D2, which is required for oxygen evolution. The PSII complex binds additional chlorophylls, carotenoids and specific lipids. is required as a cofactor.

It is found in the plastid. The protein localises to the chloroplast thylakoid membrane. The catalysed reaction is 2 a plastoquinone + 4 hnu + 2 H2O = 2 a plastoquinol + O2. In terms of biological role, photosystem II (PSII) is a light-driven water:plastoquinone oxidoreductase that uses light energy to abstract electrons from H(2)O, generating O(2) and a proton gradient subsequently used for ATP formation. It consists of a core antenna complex that captures photons, and an electron transfer chain that converts photonic excitation into a charge separation. The D1/D2 (PsbA/PsbD) reaction center heterodimer binds P680, the primary electron donor of PSII as well as several subsequent electron acceptors. D2 is needed for assembly of a stable PSII complex. The chain is Photosystem II D2 protein from Carica papaya (Papaya).